Here is a 349-residue protein sequence, read N- to C-terminus: Myocyte-specific enhancer factor 2B (349 aa).

Positions 3–57 constitute an MADS-box domain; that stretch reads RKKIQISRILDQRNRQVTFTKRKFGLMKKAYELSVLCDCDIALIIFNSAQRLFQY. A DNA-binding region (mef2-type) is located at residues 58-86; the sequence is ASSDMDRVLLKYTEYSEPHESRTNADILQ. 2 disordered regions span residues 237–317 and 330–349; these read GSFA…DFPR and AEPL…SWPR.

The protein belongs to the MEF2 family. As to quaternary structure, heterodimer. Interacts with HDAC9. Interacts with HDAC7. Highest expression found in embryonic heart and skeletal muscle. Low levels found in adult spleen, lung and testis while no expression is found in adult heart, brain or skeletal muscle.

It is found in the nucleus. Transcriptional activator which binds specifically to the MEF2 element, 5'-YTA[AT](4)TAR-3', found in numerous muscle-specific genes. Activates transcription via this element. May be involved in muscle-specific and/or growth factor-related transcription. The protein is Myocyte-specific enhancer factor 2B (Mef2b) of Mus musculus (Mouse).